A 364-amino-acid chain; its full sequence is Aminomethyltransferase (364 aa).

Belongs to the GcvT family. In terms of assembly, the glycine cleavage system is composed of four proteins: P, T, L and H.

It carries out the reaction N(6)-[(R)-S(8)-aminomethyldihydrolipoyl]-L-lysyl-[protein] + (6S)-5,6,7,8-tetrahydrofolate = N(6)-[(R)-dihydrolipoyl]-L-lysyl-[protein] + (6R)-5,10-methylene-5,6,7,8-tetrahydrofolate + NH4(+). Functionally, the glycine cleavage system catalyzes the degradation of glycine. The protein is Aminomethyltransferase of Salmonella enteritidis PT4 (strain P125109).